Reading from the N-terminus, the 358-residue chain is DnaJ homolog subfamily B member 11 (358 aa).

An N-terminal signal peptide occupies residues 1-22; that stretch reads MAPQNLSTFCLLLLYLIGTVIA. The 66-residue stretch at 25–90 folds into the J domain; that stretch reads DFYKILGVPR…EKRKQYDTYG (66 aa). Thr-188 carries the post-translational modification Phosphothreonine. Residue Asn-261 is glycosylated (N-linked (GlcNAc...) asparagine).

As to quaternary structure, part of a large chaperone multiprotein complex comprising DNAJB11, HSP90B1, HSPA5, HYOU, PDIA2, PDIA4, PDIA6, PPIB, SDF2L1, UGGT1 and very small amounts of ERP29, but not, or at very low levels, CALR nor CANX. Binds to denatured substrates in an ATP-independent manner. Interacts via the J domain with HSPA5 in an ATP-dependent manner. Contains high-mannose Endo H-sensitive carbohydrates. In terms of processing, cys-169, Cys-171, Cys-193 and Cys-196 form intramolecular disulfide bonds. The preferential partner for each Cys is not known.

It localises to the endoplasmic reticulum lumen. Its function is as follows. As a co-chaperone for HSPA5 it is required for proper folding, trafficking or degradation of proteins. Binds directly to both unfolded proteins that are substrates for ERAD and nascent unfolded peptide chains, but dissociates from the HSPA5-unfolded protein complex before folding is completed. May help recruiting HSPA5 and other chaperones to the substrate. Stimulates HSPA5 ATPase activity. It is necessary for maturation and correct trafficking of PKD1. This Mus musculus (Mouse) protein is DnaJ homolog subfamily B member 11 (Dnajb11).